Here is a 326-residue protein sequence, read N- to C-terminus: HTH-type transcriptional regulator SyrM (326 aa).

The HTH lysR-type domain maps to 32-89 (IDLNLLVDLEALLQYRHITQAAQHVGRSQPAMSRALSRLRGMLKDDLLVAGSRGLVLT). A DNA-binding region (H-T-H motif) is located at residues 49–68 (ITQAAQHVGRSQPAMSRALS).

This sequence belongs to the LysR transcriptional regulatory family.

Functionally, acts in trans to stimulate nod gene expression via nodD3 and exo gene expression via SyrA. This chain is HTH-type transcriptional regulator SyrM (syrM), found in Rhizobium meliloti (strain 1021) (Ensifer meliloti).